We begin with the raw amino-acid sequence, 1567 residues long: ABC multidrug transporter MDR1 (1567 aa).

Positions 1-11 are enriched in pro residues; the sequence is MASQPPQPPSG. The tract at residues 1–37 is disordered; it reads MASQPPQPPSGQPDTQYEEYQSEVITETTNRPTPAAD. Polar residues predominate over residues 22 to 32; it reads SEVITETTNRP. Asn149, Asn157, and Asn356 each carry an N-linked (GlcNAc...) asparagine glycan. One can recognise an ABC transporter 1 domain in the interval 167 to 432; it reads VQYQDTFLSP…FEEMGWYCPP (266 aa). The next 6 membrane-spanning stretches (helical) occupy residues 543–563, 571–591, 636–656, 661–681, 691–711, and 798–818; these read STIA…SLFF, GFFA…LMSI, IPIK…LGGL, AKFF…SAIF, IPQA…YTGF, and LGIL…VSEL. N-linked (GlcNAc...) asparagine glycosylation is found at Asn819, Asn895, and Asn912. The ABC transporter 2 domain maps to 891–1134; sequence FTWRNVTYDI…LLNYFETHGA (244 aa). 927–934 lines the ATP pocket; sequence GVSGAGKT. The segment at 1172–1202 is disordered; the sequence is ESRHVQQELDRIQSETSKRNEGHGQSAEKEP. A helical membrane pass occupies residues 1231–1251; sequence IWGKLLLGLASALFIGFSFFL. The N-linked (GlcNAc...) asparagine glycan is linked to Asn1253. The next 5 membrane-spanning stretches (helical) occupy residues 1257–1277, 1305–1325, 1345–1365, 1372–1392, and 1498–1518; these read AGLQ…SSLV, VFLL…GIIA, ILLL…QMII, ETAG…NGVL, and GIGW…YYLI.

The protein belongs to the ABC transporter superfamily. ABCG family. PDR (TC 3.A.1.205) subfamily.

The protein localises to the cell membrane. It carries out the reaction voriconazole(in) + ATP + H2O = voriconazole(out) + ADP + phosphate + H(+). The enzyme catalyses fluconazole(in) + ATP + H2O = fluconazole(out) + ADP + phosphate + H(+). The catalysed reaction is (R)-miconazole(in) + ATP + H2O = (R)-miconazole(out) + ADP + phosphate + H(+). It catalyses the reaction (S)-miconazole(in) + ATP + H2O = (S)-miconazole(out) + ADP + phosphate + H(+). Functionally, pleiotropic ABC efflux transporter that may be involved in the modulation susceptibility to a wide range of unrelated cytotoxic compounds, including ethidium bromide, ketoconazole, cycloheximide, fluconazole, griseofulvin, imazalil and itraconazole. This is ABC multidrug transporter MDR1 from Trichophyton interdigitale (strain MR816).